Reading from the N-terminus, the 68-residue chain is MKAVKMKEIREMSREEKLRKLRELELELLKLRTLVRSGGAVENPGRINLIRKDIARLKMALCEEGYRV.

The protein belongs to the universal ribosomal protein uL29 family.

This Archaeoglobus fulgidus (strain ATCC 49558 / DSM 4304 / JCM 9628 / NBRC 100126 / VC-16) protein is Large ribosomal subunit protein uL29 (rpl29).